We begin with the raw amino-acid sequence, 364 residues long: Abhydrolase domain-containing protein C57A10.08c (364 aa).

The Cytoplasmic portion of the chain corresponds to 1–8 (MYFFTISR). The helical; Signal-anchor for type II membrane protein transmembrane segment at 9–29 (LTSFISYGILGALGILTFLYL) threads the bilayer. The Lumenal segment spans residues 30 to 364 (YDAYLAKSFQ…DKFSTTDHNI (335 aa)). Serine 183 serves as the catalytic Charge relay system. N-linked (GlcNAc...) asparagine glycosylation is present at asparagine 326. Histidine 336 (charge relay system) is an active-site residue.

Belongs to the AB hydrolase superfamily.

The protein resides in the endoplasmic reticulum membrane. The polypeptide is Abhydrolase domain-containing protein C57A10.08c (Schizosaccharomyces pombe (strain 972 / ATCC 24843) (Fission yeast)).